We begin with the raw amino-acid sequence, 296 residues long: Bifunctional protein FolD (296 aa).

Residues 166-168 (GRS), serine 191, and isoleucine 232 each bind NADP(+).

The protein belongs to the tetrahydrofolate dehydrogenase/cyclohydrolase family. In terms of assembly, homodimer.

It carries out the reaction (6R)-5,10-methylene-5,6,7,8-tetrahydrofolate + NADP(+) = (6R)-5,10-methenyltetrahydrofolate + NADPH. The catalysed reaction is (6R)-5,10-methenyltetrahydrofolate + H2O = (6R)-10-formyltetrahydrofolate + H(+). It participates in one-carbon metabolism; tetrahydrofolate interconversion. Catalyzes the oxidation of 5,10-methylenetetrahydrofolate to 5,10-methenyltetrahydrofolate and then the hydrolysis of 5,10-methenyltetrahydrofolate to 10-formyltetrahydrofolate. The protein is Bifunctional protein FolD of Cereibacter sphaeroides (strain ATCC 17023 / DSM 158 / JCM 6121 / CCUG 31486 / LMG 2827 / NBRC 12203 / NCIMB 8253 / ATH 2.4.1.) (Rhodobacter sphaeroides).